A 347-amino-acid polypeptide reads, in one-letter code: NADH-ubiquinone oxidoreductase chain 2 (347 aa).

The next 11 membrane-spanning stretches (helical) occupy residues proline 3–serine 23, histidine 25–methionine 45, tyrosine 59–leucine 79, isoleucine 96–proline 116, valine 122–leucine 142, isoleucine 145–glycine 165, isoleucine 178–proline 198, leucine 202–valine 222, isoleucine 240–phenylalanine 260, isoleucine 276–leucine 296, and leucine 326–leucine 346.

This sequence belongs to the complex I subunit 2 family. As to quaternary structure, core subunit of respiratory chain NADH dehydrogenase (Complex I) which is composed of 45 different subunits. Interacts with TMEM242.

Its subcellular location is the mitochondrion inner membrane. It catalyses the reaction a ubiquinone + NADH + 5 H(+)(in) = a ubiquinol + NAD(+) + 4 H(+)(out). Its function is as follows. Core subunit of the mitochondrial membrane respiratory chain NADH dehydrogenase (Complex I) which catalyzes electron transfer from NADH through the respiratory chain, using ubiquinone as an electron acceptor. Essential for the catalytic activity and assembly of complex I. This Peropteryx macrotis (Lesser dog-like bat) protein is NADH-ubiquinone oxidoreductase chain 2.